The sequence spans 686 residues: L-type lectin-domain containing receptor kinase VII.1 (686 aa).

Positions 1 to 20 are cleaved as a signal peptide; the sequence is MKALLFLLTLFLILPNPISA. Residues 21-256 form a legume-lectin like region; sequence IDFIFNGFND…SHKILAWSFS (236 aa). Residues 21-286 are Extracellular-facing; that stretch reads IDFIFNGFND…PKDSIVKAKW (266 aa). N-linked (GlcNAc...) asparagine glycosylation is found at Asn29, Asn34, Asn52, Asn64, Asn111, Asn123, Asn168, Asn203, Asn224, and Asn259. A helical membrane pass occupies residues 287-307; it reads FVFVLVLICFLVVALVGLVLF. Topologically, residues 308 to 686 are cytoplasmic; that stretch reads AVVRKRLERA…SWNSSILEGR (379 aa). One can recognise a Protein kinase domain in the interval 347-628; that stretch reads FDEKNVIGIG…VFEGDKAEIF (282 aa). ATP is bound by residues 353-361 and Lys376; that span reads IGIGGNGKV. Residue Asp475 is the Proton acceptor of the active site.

The protein in the C-terminal section; belongs to the protein kinase superfamily. Ser/Thr protein kinase family. This sequence in the N-terminal section; belongs to the leguminous lectin family.

It localises to the cell membrane. The enzyme catalyses L-seryl-[protein] + ATP = O-phospho-L-seryl-[protein] + ADP + H(+). It catalyses the reaction L-threonyl-[protein] + ATP = O-phospho-L-threonyl-[protein] + ADP + H(+). This is L-type lectin-domain containing receptor kinase VII.1 (LECRK71) from Arabidopsis thaliana (Mouse-ear cress).